A 120-amino-acid polypeptide reads, in one-letter code: Ribonuclease P protein component 2 (120 aa).

Belongs to the eukaryotic/archaeal RNase P protein component 2 family. As to quaternary structure, consists of a catalytic RNA component and at least 4-5 protein subunits.

It localises to the cytoplasm. It catalyses the reaction Endonucleolytic cleavage of RNA, removing 5'-extranucleotides from tRNA precursor.. In terms of biological role, part of ribonuclease P, a protein complex that generates mature tRNA molecules by cleaving their 5'-ends. In Thermococcus kodakarensis (strain ATCC BAA-918 / JCM 12380 / KOD1) (Pyrococcus kodakaraensis (strain KOD1)), this protein is Ribonuclease P protein component 2.